The following is a 159-amino-acid chain: Secreted RxLR effector protein 50 (159 aa).

The signal sequence occupies residues 1–19 (MRSSTVLYVLGAAILAVNG). Residues 38–54 (RWLRSNAMEHETDDEER) carry the RxLR-dEER motif.

It belongs to the RxLR effector family.

It localises to the secreted. Its subcellular location is the host nucleus. It is found in the host cytoplasm. Functionally, secreted effector that completely suppresses the host cell death induced by cell death-inducing proteins. This Plasmopara viticola (Downy mildew of grapevine) protein is Secreted RxLR effector protein 50.